Reading from the N-terminus, the 581-residue chain is Prolactin receptor (581 aa).

An N-terminal signal peptide occupies residues 1-24 (MKENAASRVVFILLLFLSVSLLNG). Over 25-237 (QSPPEKPKLV…NDFPVKDTSM (213 aa)) the chain is Extracellular. Fibronectin type-III domains are found at residues 27 to 127 (PPEK…IVEP) and 129 to 229 (PPAN…IPND). A disulfide bridge links cysteine 36 with cysteine 46. N-linked (GlcNAc...) asparagine glycosylation is present at asparagine 59. A disulfide bridge connects residues cysteine 75 and cysteine 86. N-linked (GlcNAc...) asparagine glycosylation is present at asparagine 132. Residues aspartate 211 and histidine 212 each contribute to the Zn(2+) site. The WSXWS motif signature appears at 215–219 (WSEWS). Residues 238–258 (WIFVAILSAVICLIMVWAVAL) traverse the membrane as a helical segment. Topologically, residues 259–581 (KGYSMVTCIL…PAKKAPPALP (323 aa)) are cytoplasmic. Positions 267–275 (ILPPVPGPK) match the Box 1 motif motif. Disordered regions lie at residues 324–384 (QLMP…EKLE) and 458–499 (DQHA…PRPQ). Basic and acidic residues-rich tracts occupy residues 329–349 (PSKEHTEQGVKPMHLDLDSDS), 375–384 (HTPEGPEKLE), and 469–483 (ETGREGKATKQRESE).

Belongs to the type I cytokine receptor family. Type 1 subfamily. In terms of assembly, interacts with SMARCA1. Interacts with NEK3 and VAV2 and this interaction is prolactin-dependent. In terms of tissue distribution, expressed in all tissues examined; liver, peripheral blood lymphocytes, endometrium, corpus luteum, intestine, fetal thymus, fetal spleen, fetal liver and fetal brain.

The protein localises to the membrane. This is a receptor for the anterior pituitary hormone prolactin. In Bos taurus (Bovine), this protein is Prolactin receptor (PRLR).